A 178-amino-acid polypeptide reads, in one-letter code: Small ribosomal subunit protein uS4 (178 aa).

The S4 RNA-binding domain occupies 104–166; that stretch reads RRLQTMVYKK…PNSPMASENH (63 aa). Residues 157–178 form a disordered region; it reads PNSPMASENHPERTAAVSEENQ.

The protein belongs to the universal ribosomal protein uS4 family. In terms of assembly, part of the 30S ribosomal subunit. Contacts protein S5. The interaction surface between S4 and S5 is involved in control of translational fidelity.

One of the primary rRNA binding proteins, it binds directly to 16S rRNA where it nucleates assembly of the body of the 30S subunit. In terms of biological role, with S5 and S12 plays an important role in translational accuracy. The protein is Small ribosomal subunit protein uS4 of Methanococcus maripaludis (strain C7 / ATCC BAA-1331).